The primary structure comprises 266 residues: Energy-coupling factor transporter transmembrane protein EcfT (266 aa).

5 helical membrane passes run I32–V52, P71–G91, L107–L127, V152–M172, and D246–W266.

The protein belongs to the energy-coupling factor EcfT family. Forms a stable energy-coupling factor (ECF) transporter complex composed of 2 membrane-embedded substrate-binding proteins (S component), 2 ATP-binding proteins (A component) and 2 transmembrane proteins (T component). May be able to interact with more than 1 S component at a time.

It is found in the cell membrane. Transmembrane (T) component of an energy-coupling factor (ECF) ABC-transporter complex. Unlike classic ABC transporters this ECF transporter provides the energy necessary to transport a number of different substrates. The protein is Energy-coupling factor transporter transmembrane protein EcfT of Levilactobacillus brevis (strain ATCC 367 / BCRC 12310 / CIP 105137 / JCM 1170 / LMG 11437 / NCIMB 947 / NCTC 947) (Lactobacillus brevis).